Reading from the N-terminus, the 409-residue chain is MGQKARSAAAALAVASSEQKNNALEMIALSLEAHSDEILRANCLDLEKATQNNLKAAMVDRLKLDELRLAAMIDSVRQVARLSDPVGQIMSAWTRPNGLHISRVRTPLGVIGIIYESRPNVTIDASSLCLKAGNAVILRGGSDSFHSSYALHCALVQGLEHSGLPKSAIQMVGTTDRAAVGEILKGLDGAIDVIVPRGGKSLVARVQSDARVPVFAHLEGLCHIYIDKSADLDMARNIVLNAKLRRTGICGAVETVLIDNEALKKFLPVLTALQEKGCEIRATEDIAFLVPDVKLASEEDWSHEYLDAILSVKTVEGVEGAISHIKRYSSGHTESIIAEDMEVVKKFFNHLDSAILLHNASTQFADGGEFGFGMEIGIATGKMHARGPIGVEQLTSFQYHIKGNGQVRA.

This sequence belongs to the gamma-glutamyl phosphate reductase family.

It is found in the cytoplasm. It catalyses the reaction L-glutamate 5-semialdehyde + phosphate + NADP(+) = L-glutamyl 5-phosphate + NADPH + H(+). Its pathway is amino-acid biosynthesis; L-proline biosynthesis; L-glutamate 5-semialdehyde from L-glutamate: step 2/2. Functionally, catalyzes the NADPH-dependent reduction of L-glutamate 5-phosphate into L-glutamate 5-semialdehyde and phosphate. The product spontaneously undergoes cyclization to form 1-pyrroline-5-carboxylate. The protein is Gamma-glutamyl phosphate reductase of Bartonella tribocorum (strain CIP 105476 / IBS 506).